The following is a 492-amino-acid chain: Cytoplasmic dynein 1 light intermediate chain 2 (492 aa).

61–68 (GEDGSGKT) is an ATP binding site. Disordered regions lie at residues 187-206 (PEEG…SGSD), 371-423 (AKQP…KNNA), and 437-492 (LSKK…ENEA). Position 194 is a phosphoserine (Ser-194). A compositionally biased stretch (polar residues) spans 371 to 381 (AKQPATPTRAS). Residues Ser-383 and Ser-391 each carry the phosphoserine modification. Arg-397 carries the omega-N-methylarginine modification. Positions 400 to 412 (PASVPSSSPGTSV) are enriched in low complexity. Position 441 is a phosphothreonine (Thr-441). 2 positions are modified to phosphoserine: Ser-443 and Ser-446. Residues 452 to 469 (VQSTAKKSGQKTVLSNVQ) show a composition bias toward polar residues. The span at 471–480 (ELDRMTRKPD) shows a compositional bias: basic and acidic residues. A compositionally biased stretch (polar residues) spans 482–492 (MVTNSSTENEA).

Belongs to the dynein light intermediate chain family. As to quaternary structure, homodimer. The cytoplasmic dynein 1 complex consists of two catalytic heavy chains (HCs) and a number of non-catalytic subunits presented by intermediate chains (ICs), light intermediate chains (LICs) and light chains (LCs); the composition seems to vary in respect to the IC, LIC and LC composition. The heavy chain homodimer serves as a scaffold for the probable homodimeric assembly of the respective non-catalytic subunits. The ICs and LICs bind directly to the HC dimer and the LCs assemble on the IC dimer. Interacts with DYNC1H1; DYNC1LI1 and DYNC1LI2 bind mutually exclusive to DYNC1H.

The protein resides in the cytoplasm. It is found in the cytoskeleton. Acts as one of several non-catalytic accessory components of the cytoplasmic dynein 1 complex that are thought to be involved in linking dynein to cargos and to adapter proteins that regulate dynein function. Cytoplasmic dynein 1 acts as a motor for the intracellular retrograde motility of vesicles and organelles along microtubules. May play a role in binding dynein to membranous organelles or chromosomes. The chain is Cytoplasmic dynein 1 light intermediate chain 2 from Homo sapiens (Human).